A 439-amino-acid chain; its full sequence is Argininosuccinate lyase (439 aa).

It belongs to the lyase 1 family. Argininosuccinate lyase subfamily.

Its subcellular location is the cytoplasm. The enzyme catalyses 2-(N(omega)-L-arginino)succinate = fumarate + L-arginine. The protein operates within amino-acid biosynthesis; L-arginine biosynthesis; L-arginine from L-ornithine and carbamoyl phosphate: step 3/3. The sequence is that of Argininosuccinate lyase from Caldanaerobacter subterraneus subsp. tengcongensis (strain DSM 15242 / JCM 11007 / NBRC 100824 / MB4) (Thermoanaerobacter tengcongensis).